The sequence spans 305 residues: Coiled-coil domain-containing protein 69-A (305 aa).

Gly2 carries N-myristoyl glycine lipidation. A disordered region spans residues 13 to 38 (LRKKKRQKAHQGGLTSQELNDLNAKT). Residues 25-38 (GLTSQELNDLNAKT) show a composition bias toward polar residues. Positions 42–281 (NEVLQKIKEY…QREKEQNLYR (240 aa)) form a coiled coil.

Belongs to the CCDC69 family.

It localises to the cytoplasm. The protein localises to the cytoskeleton. It is found in the spindle. Its subcellular location is the midbody. May act as a scaffold to regulate the recruitment and assembly of spindle midzone components. This chain is Coiled-coil domain-containing protein 69-A (ccdc69-a), found in Xenopus laevis (African clawed frog).